Reading from the N-terminus, the 316-residue chain is MDMSVIMRYGDDKAEELCLEVEDYWARVDESDGFDVEGIQAPPGGTPLIHYDCHLPNSRHPDPVLVKLYASAGLHRYNMLEGTNFKLVDVMKFNKLMMHLSPFYITLLAQDPVSRSQQTFQVQVDEHCLSTMDLTVLIARPKAVSTNESVLAPQSFSVEESPEWPSDFNDGKRFYRVKESELRNNDWISLYLQLVLVSHDRMRISDSDLSKLKIVEAVIETKDDMLPPNERLLNAKTAIVYITFKGFTKCRIGDEHTERKTIVRRIFDEDTGHLSIKGELIGEYKLGGDFDPGCYFNSPAILEARRICQGLPPQPF.

The protein belongs to the UPF0725 (EMB2204) family.

This chain is UPF0725 protein At1g02770, found in Arabidopsis thaliana (Mouse-ear cress).